Here is an 894-residue protein sequence, read N- to C-terminus: Interleukin enhancer-binding factor 3 (894 aa).

The 374-residue stretch at 5-378 (RIFVNDDRHV…PMKRPMEEDG (374 aa)) folds into the DZF domain. The disordered stretch occupies residues 50–86 (DEQEKGSSEQAESDNMDVPPEDDSKEGAGEQKTEHMT). Over residues 60–73 (AESDNMDVPPEDDS) the composition is skewed to acidic residues. Ser62 is modified (phosphoserine). A compositionally biased stretch (basic and acidic residues) spans 74–86 (KEGAGEQKTEHMT). Lys100 is modified (N6-acetyllysine). The residue at position 188 (Thr188) is a Phosphothreonine; by PKR. Ser190 is subject to Phosphoserine. Residue Lys297 forms a Glycyl lysine isopeptide (Lys-Gly) (interchain with G-Cter in ubiquitin) linkage. Residue Thr315 is modified to Phosphothreonine; by PKR. Lys348 participates in a covalent cross-link: Glycyl lysine isopeptide (Lys-Gly) (interchain with G-Cter in SUMO1). The tract at residues 363–401 (TTYAITPMKRPMEEDGEEKSPSKKKKKIQKKEEKAEPPQ) is disordered. The Bipartite nuclear localization signal signature appears at 371-389 (KRPMEEDGEEKSPSKKKKK). Over residues 372 to 383 (RPMEEDGEEKSP) the composition is skewed to basic and acidic residues. Phosphoserine is present on residues Ser382 and Ser384. A Glycyl lysine isopeptide (Lys-Gly) (interchain with G-Cter in SUMO2) cross-link involves residue Lys396. The region spanning 398–467 (EPPQAMNALM…AVKVLQDMGL (70 aa)) is the DRBM 1 domain. Lys460 is subject to N6-acetyllysine. The interval 466–524 (GLPTGAEGRDSSKGEDSAEETEAKPAVVAPAPVVEAVSTPSAAFPSDATAEQGPILTKH) is disordered. The span at 472–481 (EGRDSSKGED) shows a compositional bias: basic and acidic residues. Residues Ser476, Ser477, and Ser482 each carry the phosphoserine modification. Lys489 participates in a covalent cross-link: Glycyl lysine isopeptide (Lys-Gly) (interchain with G-Cter in SUMO2). Positions 489–508 (KPAVVAPAPVVEAVSTPSAA) are enriched in low complexity. The DRBM 2 domain occupies 524–590 (HGKNPVMELN…ALAALEKLFP (67 aa)). Thr592 is modified (phosphothreonine). An interaction with PRMT1 region spans residues 609-894 (RGGPKFAAKP…ADHSMNYQYR (286 aa)). 2 disordered regions span residues 625-660 (MGGP…FGGA) and 718-894 (QGDN…YQYR). Residues 644 to 660 (RGGSIRGRGRGRGFGGA) are compositionally biased toward gly residues. 2 stretches are compositionally biased toward low complexity: residues 743–770 (PSYG…YGPP) and 777–792 (YNHG…SYNS). Phosphoserine is present on residues Ser792, Ser810, Ser812, and Ser816. Gly residues-rich tracts occupy residues 811-825 (GSGG…GSGG) and 832-851 (SHGG…GKQG). A compositionally biased stretch (polar residues) spans 857-866 (NYNSPGSGQN). Low complexity predominate over residues 867–878 (YSGPPSSYQSSQ).

In terms of assembly, identified in a IGF2BP1-dependent mRNP granule complex containing untranslated mRNAs. Interacts with FUS and SMN. Interacts (via C-terminus) with PRMT1. Forms a complex with ILF2. Can also bind to PRKDC/XRCC7: this may stabilize the interaction of PRKDC/XRCC7 and the heterodimeric complex of XRCC6/KU70 and XRCC5/KU80. Forms a heteromeric complex with ZNF346 and ILF3. Found in a nuclear export complex with XPO5, ILF3, Ran and double-stranded RNA or double-stranded minihelix VA1 RNA. Found in a nuclear export complex with XPO5, RAN, ILF3, ZNF346 and double-stranded RNA. Interacts with XPO5 and ZNF346. Forms a complex with ILF2, YLPM1, KHDRBS1, RBMX, NCOA5 and PPP1CA. Interacts with AGO1 and AGO2. Interacts with DHX36; this interaction occurs in a RNA-dependent manner. Interacts with ELAVL1; this interaction occurs in a RNA-dependent manner. Interacts with HAVCR2; this interaction promotes ILF3 ubiquitination and subsequent degradation. In terms of processing, phosphorylated at Thr-188 and Thr-315 by PKR in response to certain RNA viruses. This phosphorylation results in the dissociation of ILF2 from the ILF2-ILF3 complex resulting in a cytoplasmic sequestration of ILF3 where it can bind to viral RNAs and impede viral replication. Methylated by protein arginine N-methyltransferase 1. Post-translationally, ubiquitinated at Lys-297 in a TRIM47-dependent manner; this 'Lys-48'-linked ubiquitination promotes ILF3 degradation. As to expression, ubiquitous.

The protein resides in the nucleus. It is found in the nucleolus. Its subcellular location is the cytoplasm. Functionally, RNA-binding protein that plays an essential role in the biogenesis of circular RNAs (circRNAs) which are produced by back-splicing circularization of pre-mRNAs. Within the nucleus, promotes circRNAs processing by stabilizing the regulatory elements residing in the flanking introns of the circularized exons. Plays thereby a role in the back-splicing of a subset of circRNAs. As a consequence, participates in a wide range of transcriptional and post-transcriptional processes. Binds to poly-U elements and AU-rich elements (AREs) in the 3'-UTR of target mRNAs. Upon viral infection, ILF3 accumulates in the cytoplasm and participates in the innate antiviral response. Mechanistically, ILF3 becomes phosphorylated and activated by the double-stranded RNA-activated protein kinase/PKR which releases ILF3 from cellular mature circRNAs. In turn, unbound ILF3 molecules are able to interact with and thus inhibit viral mRNAs. (Microbial infection) Plays a positive role in HIV-1 virus production by binding to and thereby stabilizing HIV-1 RNA, together with ILF3. This chain is Interleukin enhancer-binding factor 3 (ILF3), found in Homo sapiens (Human).